A 430-amino-acid polypeptide reads, in one-letter code: Type II methyltransferase M.Sau96I (430 aa).

Residues 9–63 (IEKMKNQNIKTQTELAEKIDISKSQLSFMFSDEYEPLKKNVIKLADVLKVSPNDI) form the HTH cro/C1-type domain. The SAM-dependent MTase C5-type domain occupies 99–429 (YNVFETFAGA…KSLVHYLNQF (331 aa)). Residue Cys174 is part of the active site.

The protein belongs to the class I-like SAM-binding methyltransferase superfamily. C5-methyltransferase family.

The enzyme catalyses a 2'-deoxycytidine in DNA + S-adenosyl-L-methionine = a 5-methyl-2'-deoxycytidine in DNA + S-adenosyl-L-homocysteine + H(+). Its function is as follows. A methylase that recognizes the double-stranded sequence 5'-GGNCC-3', methylates C-4 on both strands, and protects the DNA from cleavage by the Sau96I endonuclease. The chain is Type II methyltransferase M.Sau96I from Staphylococcus aureus.